An 828-amino-acid chain; its full sequence is Zinc finger protein 438 (828 aa).

Disordered regions lie at residues 1–29 (MQNS…KGLQ), 143–173 (KSGC…LYKP), and 193–231 (ALTN…PAKQ). Composition is skewed to polar residues over residues 16 to 29 (NIPS…KGLQ) and 150 to 159 (PAQTQMCPQM). 3 C2H2-type zinc fingers span residues 507-529 (HRCH…MNTH), 535-557 (YSCR…MKLH), and 567-590 (MCCE…KEVH). Residues 680 to 721 (EGTFPGSKGTQEELVQHASPDWKRHPERGKPEKVHSSSEESH) form a disordered region. Residues 689–721 (TQEELVQHASPDWKRHPERGKPEKVHSSSEESH) show a composition bias toward basic and acidic residues. The C2H2-type 4 zinc-finger motif lies at 776-799 (FNCLLCAEMLGRKEDLLHHWKHQH).

The protein belongs to the krueppel C2H2-type zinc-finger protein family. In terms of tissue distribution, ubiquitous.

It localises to the nucleus. Isoform 1 acts as a transcriptional repressor. In Homo sapiens (Human), this protein is Zinc finger protein 438 (ZNF438).